The sequence spans 350 residues: Protein pelota homolog (350 aa).

This sequence belongs to the eukaryotic release factor 1 family. Pelota subfamily. Monomer. The cofactor is a divalent metal cation.

It localises to the cytoplasm. Its function is as follows. May function in recognizing stalled ribosomes, interact with stem-loop structures in stalled mRNA molecules, and effect endonucleolytic cleavage of the mRNA. May play a role in the release non-functional ribosomes and degradation of damaged mRNAs. Has endoribonuclease activity. This Methanosarcina acetivorans (strain ATCC 35395 / DSM 2834 / JCM 12185 / C2A) protein is Protein pelota homolog.